The chain runs to 476 residues: Cysteine--tRNA ligase (476 aa).

Cys28 is a Zn(2+) binding site. A 'HIGH' region motif is present at residues Val30 to His40. Zn(2+) contacts are provided by Cys215, His241, and Glu245. Positions Lys273 to Ser277 match the 'KMSKS' region motif. Lys276 provides a ligand contact to ATP.

This sequence belongs to the class-I aminoacyl-tRNA synthetase family. As to quaternary structure, monomer. The cofactor is Zn(2+).

The protein localises to the cytoplasm. The enzyme catalyses tRNA(Cys) + L-cysteine + ATP = L-cysteinyl-tRNA(Cys) + AMP + diphosphate. In Buchnera aphidicola subsp. Cinara cedri (strain Cc), this protein is Cysteine--tRNA ligase.